The sequence spans 318 residues: Na(+)-translocating ferredoxin:NAD(+) oxidoreductase complex subunit D (318 aa).

Transmembrane regions (helical) follow at residues 35–55 (LAVA…ICVI), 77–99 (WSAV…WWIG), and 114–134 (FGGL…FLLA). Thr156 bears the FMN phosphoryl threonine mark. The next 3 membrane-spanning stretches (helical) occupy residues 182–202 (VYGC…LYLI), 206–226 (IISW…ALLV), and 261–281 (IIYA…GGYP).

Belongs to the NqrB/RnfD family. In terms of assembly, the complex is composed of six subunits: RnfA, RnfB, RnfC, RnfD, RnfE and RnfG. FMN serves as cofactor.

It localises to the cell membrane. It catalyses the reaction 2 reduced [2Fe-2S]-[ferredoxin] + Na(+)(in) + NAD(+) + H(+) = 2 oxidized [2Fe-2S]-[ferredoxin] + Na(+)(out) + NADH. In terms of biological role, part of a membrane-bound complex that couples electron transfer with translocation of ions across the membrane. Couples electron transfer from reduced ferredoxin to NAD(+) with electrogenic movement of Na(+) out of the cell. Involved in caffeate respiration. The chain is Na(+)-translocating ferredoxin:NAD(+) oxidoreductase complex subunit D from Acetobacterium woodii (strain ATCC 29683 / DSM 1030 / JCM 2381 / KCTC 1655 / WB1).